The sequence spans 390 residues: Digeranylgeranylglycerophospholipid reductase (390 aa).

A18, E37, C48, A49, A51, R98, V122, D278, G290, and I291 together coordinate FAD. Residue V368 participates in a 2,3-bis-O-(geranylgeranyl)-sn-glycerol 1-phospholipid binding.

Belongs to the geranylgeranyl reductase family. DGGGPL reductase subfamily. FAD serves as cofactor.

The catalysed reaction is a 2,3-bis-O-phytanyl-sn-glycerol 1-phospholipid + 8 A = a 2,3-bis-O-(geranylgeranyl)-sn-glycerol 1-phospholipid + 8 AH2. The enzyme catalyses 2,3-bis-O-(phytanyl)-sn-glycerol 1-phosphate + 8 A = 2,3-bis-O-(geranylgeranyl)-sn-glycerol 1-phosphate + 8 AH2. It carries out the reaction CDP-2,3-bis-O-(geranylgeranyl)-sn-glycerol + 8 AH2 = CDP-2,3-bis-O-(phytanyl)-sn-glycerol + 8 A. It catalyses the reaction archaetidylserine + 8 AH2 = 2,3-bis-O-phytanyl-sn-glycero-3-phospho-L-serine + 8 A. Its pathway is membrane lipid metabolism; glycerophospholipid metabolism. Is involved in the reduction of 2,3-digeranylgeranylglycerophospholipids (unsaturated archaeols) into 2,3-diphytanylglycerophospholipids (saturated archaeols) in the biosynthesis of archaeal membrane lipids. Catalyzes the formation of archaetidic acid (2,3-di-O-phytanyl-sn-glyceryl phosphate) from 2,3-di-O-geranylgeranylglyceryl phosphate (DGGGP) via the hydrogenation of each double bond of the isoprenoid chains. Is also probably able to reduce double bonds of geranyl groups in CDP-2,3-bis-O-(geranylgeranyl)-sn-glycerol and archaetidylserine, thus acting at various stages in the biosynthesis of archaeal membrane lipids. The chain is Digeranylgeranylglycerophospholipid reductase from Methanococcus maripaludis (strain C5 / ATCC BAA-1333).